Here is a 136-residue protein sequence, read N- to C-terminus: Pleckstrin homology-like domain family A member 2 (136 aa).

The 95-residue stretch at 9 to 103 (ILKEGELEKR…WNAVIAIALV (95 aa)) folds into the PH domain.

The protein belongs to the PHLDA2 family.

It is found in the cytoplasm. It localises to the membrane. Plays a role in regulating placenta growth. May act via its PH domain that competes with other PH domain-containing proteins, thereby preventing their binding to membrane lipids. This chain is Pleckstrin homology-like domain family A member 2 (phlda2), found in Danio rerio (Zebrafish).